The primary structure comprises 405 residues: Cytoplasmic polyadenylated homeobox-like protein (405 aa).

Disordered regions lie at residues Met-1–His-33 and Pro-340–Gly-363. Basic and acidic residues predominate over residues Glu-13–Thr-23. The segment covering Lys-24 to His-33 has biased composition (basic residues). Positions Lys-28–Glu-87 form a DNA-binding region, homeobox. Positions Gln-346–Gln-360 are enriched in low complexity.

The protein resides in the nucleus. Its function is as follows. Transcription factor that acts as activator. The sequence is that of Cytoplasmic polyadenylated homeobox-like protein from Homo sapiens (Human).